A 209-amino-acid chain; its full sequence is Peptidyl-tRNA hydrolase (209 aa).

TRNA is bound at residue Tyr14. His19 functions as the Proton acceptor in the catalytic mechanism. Residues Tyr68, Asn70, and Asn116 each contribute to the tRNA site.

This sequence belongs to the PTH family. Monomer.

It is found in the cytoplasm. It catalyses the reaction an N-acyl-L-alpha-aminoacyl-tRNA + H2O = an N-acyl-L-amino acid + a tRNA + H(+). Hydrolyzes ribosome-free peptidyl-tRNAs (with 1 or more amino acids incorporated), which drop off the ribosome during protein synthesis, or as a result of ribosome stalling. In terms of biological role, catalyzes the release of premature peptidyl moieties from peptidyl-tRNA molecules trapped in stalled 50S ribosomal subunits, and thus maintains levels of free tRNAs and 50S ribosomes. The polypeptide is Peptidyl-tRNA hydrolase (Phenylobacterium zucineum (strain HLK1)).